Here is a 65-residue protein sequence, read N- to C-terminus: Large ribosomal subunit protein bL35 (65 aa).

Belongs to the bacterial ribosomal protein bL35 family.

The chain is Large ribosomal subunit protein bL35 from Prochlorococcus marinus (strain NATL1A).